The primary structure comprises 497 residues: Aspartyl/glutamyl-tRNA(Asn/Gln) amidotransferase subunit B (497 aa).

It belongs to the GatB/GatE family. GatB subfamily. In terms of assembly, heterotrimer of A, B and C subunits.

The catalysed reaction is L-glutamyl-tRNA(Gln) + L-glutamine + ATP + H2O = L-glutaminyl-tRNA(Gln) + L-glutamate + ADP + phosphate + H(+). It carries out the reaction L-aspartyl-tRNA(Asn) + L-glutamine + ATP + H2O = L-asparaginyl-tRNA(Asn) + L-glutamate + ADP + phosphate + 2 H(+). Functionally, allows the formation of correctly charged Asn-tRNA(Asn) or Gln-tRNA(Gln) through the transamidation of misacylated Asp-tRNA(Asn) or Glu-tRNA(Gln) in organisms which lack either or both of asparaginyl-tRNA or glutaminyl-tRNA synthetases. The reaction takes place in the presence of glutamine and ATP through an activated phospho-Asp-tRNA(Asn) or phospho-Glu-tRNA(Gln). This chain is Aspartyl/glutamyl-tRNA(Asn/Gln) amidotransferase subunit B, found in Novosphingobium aromaticivorans (strain ATCC 700278 / DSM 12444 / CCUG 56034 / CIP 105152 / NBRC 16084 / F199).